A 198-amino-acid chain; its full sequence is MPEQSNDYRVVVFGAGGVGKSSLVLRFVKGTFRDTYIPTIEDTYRQVISCDKSVCTLQITDTTGSHQFPAMQRLSISKGHAFILVFSVTSKQSLEELGPIYKLIVQIKGSVEDIPVMLVGNKCDETQREVDTREAQAVAQEWKCAFMETSAKMNYNVKELFQELLTLETRRNMSLNIDGKRSGKQKRTDRVKGKCTLM.

Residues G17 to S22, R33 to T39, D61 to S65, N121 to E125, A151, and A151 to K152 contribute to the GTP site. An Effector region motif is present at residues Y36 to Y44. A compositionally biased stretch (basic and acidic residues) spans D178–K192. Residues D178 to M198 are disordered. C195 is subject to Cysteine methyl ester. C195 carries the S-geranylgeranyl cysteine lipid modification. Residues T196–M198 constitute a propeptide, removed in mature form.

The protein belongs to the small GTPase superfamily. Di-Ras family. Highly expressed in heart and brain.

It is found in the cell membrane. Functionally, displays low GTPase activity and exists predominantly in the GTP-bound form. This Homo sapiens (Human) protein is GTP-binding protein Di-Ras1 (DIRAS1).